The following is a 153-amino-acid chain: Type II secretion system core protein G (153 aa).

Residues 1-7 (MERRQRG) constitute a propeptide, leader sequence. Residue Phe8 is modified to N-methylphenylalanine. A helical transmembrane segment spans residues 8-28 (FTLLEIMVVIVILGVLASLVV). Disordered regions lie at residues 68–91 (EQGLGALVKKPTTPPEPRNYPQDG) and 126–153 (MPDTDDDIGNWNVGNGAHNNGGNGNGNP). Positions 134–143 (GNWNVGNGAH) are enriched in low complexity. Over residues 144–153 (NNGGNGNGNP) the composition is skewed to gly residues.

Belongs to the GSP G family. As to quaternary structure, type II secretion system is composed of four main components: the outer membrane complex, the inner membrane complex, the cytoplasmic secretion ATPase and the periplasm-spanning pseudopilus. Forms homomultimers. Post-translationally, cleaved by the prepilin peptidase. Methylated by prepilin peptidase at the amino group of the N-terminal phenylalanine once the leader sequence is cleaved.

It localises to the cell inner membrane. Functionally, core component of the type II secretion system required for the energy-dependent secretion of extracellular factors such as proteases and toxins from the periplasm. Pseudopilin (pilin-like) protein that polymerizes to form the pseudopilus. Further polymerization triggers pseudopilus growth. This Dickeya chrysanthemi (Pectobacterium chrysanthemi) protein is Type II secretion system core protein G (outG).